We begin with the raw amino-acid sequence, 547 residues long: Chaperonin GroEL 1 (547 aa).

ATP contacts are provided by residues Thr30–Pro33, Lys51, Asp87–Thr91, Gly415, and Asp496.

This sequence belongs to the chaperonin (HSP60) family. In terms of assembly, forms a cylinder of 14 subunits composed of two heptameric rings stacked back-to-back. Interacts with the co-chaperonin GroES.

It is found in the cytoplasm. It carries out the reaction ATP + H2O + a folded polypeptide = ADP + phosphate + an unfolded polypeptide.. In terms of biological role, together with its co-chaperonin GroES, plays an essential role in assisting protein folding. The GroEL-GroES system forms a nano-cage that allows encapsulation of the non-native substrate proteins and provides a physical environment optimized to promote and accelerate protein folding. This is Chaperonin GroEL 1 from Rhodopseudomonas palustris (strain BisB5).